Reading from the N-terminus, the 448-residue chain is Trigger factor (448 aa).

The PPIase FKBP-type domain occupies 167-253 (GSIVRVDFVE…VKDIKRRDIP (87 aa)).

This sequence belongs to the FKBP-type PPIase family. Tig subfamily.

The protein resides in the cytoplasm. The enzyme catalyses [protein]-peptidylproline (omega=180) = [protein]-peptidylproline (omega=0). Functionally, involved in protein export. Acts as a chaperone by maintaining the newly synthesized protein in an open conformation. Functions as a peptidyl-prolyl cis-trans isomerase. This Borrelia duttonii (strain Ly) protein is Trigger factor.